The chain runs to 289 residues: Diaminopimelate epimerase (289 aa).

The substrate site is built by Asn11 and Asn78. The active-site Proton donor is Cys87. Substrate contacts are provided by residues 88 to 89 (GN), Asn163, Asn199, and 217 to 218 (ER). The active-site Proton acceptor is the Cys226. 227–228 (GT) contacts substrate.

The protein belongs to the diaminopimelate epimerase family. As to quaternary structure, homodimer.

The protein localises to the cytoplasm. The catalysed reaction is (2S,6S)-2,6-diaminopimelate = meso-2,6-diaminopimelate. The protein operates within amino-acid biosynthesis; L-lysine biosynthesis via DAP pathway; DL-2,6-diaminopimelate from LL-2,6-diaminopimelate: step 1/1. Catalyzes the stereoinversion of LL-2,6-diaminopimelate (L,L-DAP) to meso-diaminopimelate (meso-DAP), a precursor of L-lysine and an essential component of the bacterial peptidoglycan. This Mycobacterium bovis (strain ATCC BAA-935 / AF2122/97) protein is Diaminopimelate epimerase.